We begin with the raw amino-acid sequence, 435 residues long: MLDSKLLRTELDETAAKLARRGFKLDVETIRKLEEQRKSIQVEVENLQSTRNSISKQIGQKMAAGDKEGAEEIKKQIGTLGSDLDAKKVELEQVMAQLDEFTLSVPNIPADEVPDGKDENDNVEISRWGEPKTYDFDLKDHVDLGEMGGGLDFASAVKITGARFIVMKGQFARLHRAIAQFMLDLHTEEHGYTEMYVPYLVNSDSLFGTGQLPKFGKDLFHTEPLAEKVNDEEPRKLSLIPTAEVPVTNLVRDTITDEADLPIKMTAHTPCFRSEAGSYGRDTRGLIRMHQFDKVELVQITKPEDSMTALEELTGHAEKVLQLLELPYRKVVLCTGDMGFGARKTYDLEVWVPAQETYREISSCSNMWDFQARRMQARFRRKGEKKPELVHTLNGSGLAVGRTMVAILENNQEADGRIAIPAVLQKYMGGATHIG.

242–244 (TAE) is an L-serine binding site. ATP is bound at residue 273–275 (RSE). Residue Glu296 coordinates L-serine. Residue 360-363 (EISS) coordinates ATP. Ser396 is a binding site for L-serine.

It belongs to the class-II aminoacyl-tRNA synthetase family. Type-1 seryl-tRNA synthetase subfamily. Homodimer. The tRNA molecule binds across the dimer.

The protein resides in the cytoplasm. It carries out the reaction tRNA(Ser) + L-serine + ATP = L-seryl-tRNA(Ser) + AMP + diphosphate + H(+). It catalyses the reaction tRNA(Sec) + L-serine + ATP = L-seryl-tRNA(Sec) + AMP + diphosphate + H(+). Its pathway is aminoacyl-tRNA biosynthesis; selenocysteinyl-tRNA(Sec) biosynthesis; L-seryl-tRNA(Sec) from L-serine and tRNA(Sec): step 1/1. Catalyzes the attachment of serine to tRNA(Ser). Is also able to aminoacylate tRNA(Sec) with serine, to form the misacylated tRNA L-seryl-tRNA(Sec), which will be further converted into selenocysteinyl-tRNA(Sec). This is Serine--tRNA ligase from Vibrio parahaemolyticus serotype O3:K6 (strain RIMD 2210633).